The sequence spans 727 residues: Iron-sulfur clusters transporter ATM1, mitochondrial (727 aa).

Residues 1–25 (MLIGGAQNRLYQLRTSNILGLLRTR) constitute a mitochondrion transit peptide. Residues 26 to 138 (SALRVGSKVE…PRGNTKVKVR (113 aa)) lie on the Mitochondrial matrix side of the membrane. The interval 87–107 (KSKLPNEDTAHNASEKNSKKT) is disordered. The span at 90 to 107 (LPNEDTAHNASEKNSKKT) shows a compositional bias: basic and acidic residues. The chain crosses the membrane as a helical span at residues 139-160 (VLLALALLIGAKVLNVQVPFFF). Positions 139 to 429 (VLLALALLIG…LGSVYRELKQ (291 aa)) constitute an ABC transmembrane type-1 domain. At 161–183 (KQIIDGMNVDWSDATVALPAALG) the chain is on the mitochondrial intermembrane side. A helical transmembrane segment spans residues 184 to 207 (LTIMCYGLARFGAVLFGELRNAIF). The Mitochondrial matrix segment spans residues 208–256 (ARVAQNAIRNVSLQTFEHLMKLDLGWHLSRQTGGLTRAMDRGTKGISYV). Residues 257–280 (LSAMVFHIIPITFEISVVCGILTY) traverse the membrane as a helical segment. A topological domain (mitochondrial intermembrane) is located at residue glutamine 281. The chain crosses the membrane as a helical span at residues 282–302 (FGASFAGITFTTMLLYSIFTI). Residues 303–368 (RTTAWRTRFR…SQVKVAQSLA (66 aa)) are Mitochondrial matrix-facing. Residues 308 to 312 (RTRFR) and 371 to 374 (NSGQ) contribute to the glutathione site. A helical transmembrane segment spans residues 369–387 (FLNSGQSLIFTTALTGMMY). Topologically, residues 388-402 (MGCTGVIGGDLTVGD) are mitochondrial intermembrane. A helical transmembrane segment spans residues 403–424 (LVLINQLVFQLSVPLNFLGSVY). Glycine 421 contacts glutathione. The Mitochondrial matrix segment spans residues 425–727 (RELKQSLIDM…ETLEKLNKSI (303 aa)). The region spanning 465 to 701 (IKFENVTFGY…ENSLYKELWR (237 aa)) is the ABC transporter domain. ATP contacts are provided by residues tyrosine 474 and 498–509 (GPSGSGKSTVLK).

This sequence belongs to the ABC transporter superfamily. ABCB family. Heavy Metal importer (TC 3.A.1.210) subfamily. Homodimer.

It localises to the mitochondrion inner membrane. Performs an essential function in the generation of cytoplasmic iron-sulfur proteins by mediating the ATP-dependent export of Fe/S cluster precursors synthesized by NFS1 and other mitochondrial proteins. Hydrolyzes ATP. Binds glutathione and may function by transporting a glutathione-conjugated iron-sulfur compound. This is Iron-sulfur clusters transporter ATM1, mitochondrial from Candida glabrata (strain ATCC 2001 / BCRC 20586 / JCM 3761 / NBRC 0622 / NRRL Y-65 / CBS 138) (Yeast).